We begin with the raw amino-acid sequence, 144 residues long: Large ribosomal subunit protein uL15 (144 aa).

Residues 1-49 (MRLNTLSPAAGAKSAAKRVGRGIGSGTGKTCGRGHKGQKSRSGGGVRVG) are disordered. Residues 21–31 (RGIGSGTGKTC) are compositionally biased toward gly residues.

The protein belongs to the universal ribosomal protein uL15 family. As to quaternary structure, part of the 50S ribosomal subunit.

Binds to the 23S rRNA. This chain is Large ribosomal subunit protein uL15, found in Shewanella sediminis (strain HAW-EB3).